A 710-amino-acid polypeptide reads, in one-letter code: MAAGRHGGYRDYEARERELDAEASRRSKEQQHHHHPSGRHQRGDSDPRCEADRRRDGGRSRGGRELSNGYGHRRSPPPRSRLSARLGDREPGEVLSGSASDDSGGRPHRARENGVSSSSRDGESVVAASASSPSKKRKFSPIIWDRDSPKPMHSDVAKGKKAVDSVPTELPLPPPPPLPPQDHIPERLAVEKSPMDVEPAVASESPEQLQEHAESRVMEEEEEYSTMRNISTSRWAGANDDEEEGAPHRKKKSASPADSAELGQRKKALSPELGEVVASDISGGRTMSRSSDSGRLGADENEDLEVDKDDYMDVDRDDDGNSDIANHQSGMDSEYEVRRSETPEPVKPPHRCINMLQGCRSVDEFERLNKINEGTYGVVYRARDKKTGEIVALKKVKMEKEREGFPLTSLREINILLSFHHPSIVDVKEVVVGSSLDSIFMVMEYMEHDLKGVMEAMKQPYSQSEVKCLMLQLLEGVKYLHDNWVLHRDLKTSNLLLNNRGELKICDFGLSRQYGSPLKPYTQLVVTLWYRAPELLLGTKEYSTAIDMWSVGCIMAELLAKEPLFNGKTEFEQLDKIFRTLGTPNEKIWPGYAKLPGVKVNFVKQPYNRLRDKFPAASFSGRPILSEAGFDLLNNLLTYDPEKRLSADAALQHEWFREVPLPKSKDFMPTFPALNELDRRTKRYLKSPDPLEEQRLKELQGNIGNRGLFG.

The interval 1–350 (MAAGRHGGYR…ETPEPVKPPH (350 aa)) is disordered. Positions 8-30 (GYRDYEARERELDAEASRRSKEQ) are enriched in basic and acidic residues. Over residues 31–40 (QHHHHPSGRH) the composition is skewed to basic residues. Positions 41 to 64 (QRGDSDPRCEADRRRDGGRSRGGR) are enriched in basic and acidic residues. The segment covering 124–133 (SVVAASASSP) has biased composition (low complexity). Over residues 144–163 (WDRDSPKPMHSDVAKGKKAV) the composition is skewed to basic and acidic residues. Pro residues predominate over residues 170 to 182 (LPLPPPPPLPPQD). Basic and acidic residues-rich tracts occupy residues 183–195 (HIPE…KSPM) and 209–218 (LQEHAESRVM). Over residues 299–308 (DENEDLEVDK) the composition is skewed to acidic residues. Residues 335 to 344 (YEVRRSETPE) show a composition bias toward basic and acidic residues. A Protein kinase domain is found at 365 to 656 (FERLNKINEG…ADAALQHEWF (292 aa)). ATP is bound by residues 371–379 (INEGTYGVV) and Lys-394. The residue at position 375 (Thr-375) is a Phosphothreonine. A Phosphotyrosine modification is found at Tyr-376. Asp-489 serves as the catalytic Proton acceptor. Ser-516 carries the post-translational modification Phosphoserine. The residue at position 522 (Thr-522) is a Phosphothreonine.

It belongs to the protein kinase superfamily. CMGC Ser/Thr protein kinase family. CDC2/CDKX subfamily.

The enzyme catalyses L-seryl-[protein] + ATP = O-phospho-L-seryl-[protein] + ADP + H(+). It carries out the reaction L-threonyl-[protein] + ATP = O-phospho-L-threonyl-[protein] + ADP + H(+). It catalyses the reaction [DNA-directed RNA polymerase] + ATP = phospho-[DNA-directed RNA polymerase] + ADP + H(+). The sequence is that of Cyclin-dependent kinase G-2 (CDKG-2) from Oryza sativa subsp. indica (Rice).